The chain runs to 183 residues: uncharacterized protein (183 aa).

It belongs to the asfivirus S183L family.

This is an uncharacterized protein from Ornithodoros (relapsing fever ticks).